The primary structure comprises 521 residues: MLNLERLGLINFKNVYRNLPVAKLIEEAVKREEGVLVNNGAFNVYTGKYTGRSPNDKFIVDEPEVHEDIWWENNKPISVEKFEKLYNRLIAYLQNRDLFIFDGFVGADPQYRVSIRVITEYAYQSLMARQLFIRPTEKELQNFVPEYTLIAAPRFKAIPEIDGVNSEAFIILSFTKKLIIIGGTQYGGEIKKSIFTLMNYLMPKKGVLSMHCSANIGKDGDTALFFGLSGTGKTTLSADPERFLIGDDEHGWSERGIFNFEGGCYAKCINLSREKEPQIWDSIRFGAILENVVYDEATRELDYTSDKITENTRAAYPIDFIPGAVQSGIGGHPKTIIFLTADAFGVLPPIAKLTKEQAMYYFLSGYTSKLAGTERGITEPQATFSTCFGAPFLPLPPMVYAKMLGEKIEKYDTKVFLVNTGWSGGPYGIGKRINLEYTRKMVSAALKGELDKVEFTKDPIFNLNIPASCPGVPSEILNPRNTWKDKEEYDKTAKRLAQRFIENFQKYKEVSEEIKNAGPKG.

Substrate-binding residues include Arg-52, Tyr-186, and Lys-192. ATP contacts are provided by residues Lys-192, His-211, and 227–235; that span reads GLSGTGKTT. The Mn(2+) site is built by Lys-192 and His-211. Residue Asp-248 coordinates Mn(2+). Residues Glu-276, Arg-313, 432–433, and Thr-438 each bind ATP; that span reads RI. Arg-313 is a substrate binding site.

The protein belongs to the phosphoenolpyruvate carboxykinase (ATP) family. Mn(2+) is required as a cofactor.

It is found in the cytoplasm. The catalysed reaction is oxaloacetate + ATP = phosphoenolpyruvate + ADP + CO2. Its pathway is carbohydrate biosynthesis; gluconeogenesis. Its function is as follows. Involved in the gluconeogenesis. Catalyzes the conversion of oxaloacetate (OAA) to phosphoenolpyruvate (PEP) through direct phosphoryl transfer between the nucleoside triphosphate and OAA. The polypeptide is Phosphoenolpyruvate carboxykinase (ATP) (Caldanaerobacter subterraneus subsp. tengcongensis (strain DSM 15242 / JCM 11007 / NBRC 100824 / MB4) (Thermoanaerobacter tengcongensis)).